The chain runs to 756 residues: Tubulin glycylase 3B (756 aa).

The tract at residues 104–123 (TPLPRTVTSSPTAPEAQKRQ) is disordered. Residues 272 to 629 (LEERMAFIED…DLPKNPTAAT (358 aa)) form the TTL domain. ATP is bound by residues 440 to 443 (QKYI), Lys453, and Asp455. Residues 709 to 736 (ITKKKKLSASAGSSTAASAQPSTQNLTT) are disordered. Low complexity predominate over residues 716–727 (SASAGSSTAASA).

The protein resides in the cytoplasm. It localises to the cytoskeleton. It is found in the nucleus. Its function is as follows. Essential glycylase which modifies both tubulin and non-tubulin proteins, generating side chains of glycine on the gamma-carboxyl groups of specific glutamate residues of target proteins. Monoglycylates alpha-tubulin by adding a single glycine chain to generate monoglycine side chains, but is not involved in elongation step to generate polyglycine side chains on alpha-tubulin. Has the ability to both mono- and polyglycylate non-tubulin proteins such as up (Troponin T). Required for early steps of spermatogenesis. This is Tubulin glycylase 3B (TTLL3B) from Drosophila melanogaster (Fruit fly).